The sequence spans 895 residues: Protein translocase subunit SecA (895 aa).

Residues Gln-90, 108 to 112 (GEGKS), and Asp-498 each bind ATP.

Belongs to the SecA family.

The protein localises to the plastid. It is found in the chloroplast stroma. Its subcellular location is the chloroplast thylakoid membrane. It carries out the reaction ATP + H2O + cellular proteinSide 1 = ADP + phosphate + cellular proteinSide 2.. In terms of biological role, has a central role in coupling the hydrolysis of ATP to the transfer of proteins across the thylakoid membrane. This chain is Protein translocase subunit SecA, found in Cyanidium caldarium (Red alga).